The chain runs to 673 residues: Pesticin receptor (673 aa).

The first 22 residues, 1 to 22 (MKMTRLYPLALGGLLLPAIANA), serve as a signal peptide directing secretion. The TonB box signature appears at 30 to 37 (STLEVTAS). Residues 41 to 155 (SRSASANNVS…QGGIINIVTQ (115 aa)) form the TBDR plug domain. The region spanning 160–672 (TPRGYIEGGV…TVGINTRIDF (513 aa)) is the TBDR beta-barrel domain. A TonB C-terminal box motif is present at residues 657–673 (QVNMGRTVGINTRIDFF).

The protein belongs to the TonB-dependent receptor family.

It is found in the cell outer membrane. Its function is as follows. Receptor for the bacteriocin pesticin and for the siderophore yersiniabactin. The sequence is that of Pesticin receptor (fyuA) from Yersinia enterocolitica.